A 332-amino-acid polypeptide reads, in one-letter code: tRNA dimethylallyltransferase (332 aa).

14–21 is an ATP binding site; sequence GPTASGKT. 16 to 21 serves as a coordination point for substrate; that stretch reads TASGKT. An interaction with substrate tRNA region spans residues 39–42; sequence DSMQ. A disordered region spans residues 312–332; that stretch reads NKRSSNHDCKRKHPRPSTREL. Positions 320–332 are enriched in basic residues; sequence CKRKHPRPSTREL.

This sequence belongs to the IPP transferase family. As to quaternary structure, monomer. Requires Mg(2+) as cofactor.

It catalyses the reaction adenosine(37) in tRNA + dimethylallyl diphosphate = N(6)-dimethylallyladenosine(37) in tRNA + diphosphate. Its function is as follows. Catalyzes the transfer of a dimethylallyl group onto the adenine at position 37 in tRNAs that read codons beginning with uridine, leading to the formation of N6-(dimethylallyl)adenosine (i(6)A). The sequence is that of tRNA dimethylallyltransferase from Staphylococcus epidermidis (strain ATCC 35984 / DSM 28319 / BCRC 17069 / CCUG 31568 / BM 3577 / RP62A).